A 234-amino-acid polypeptide reads, in one-letter code: tRNA1(Val) (adenine(37)-N6)-methyltransferase (234 aa).

The protein belongs to the methyltransferase superfamily. tRNA (adenine-N(6)-)-methyltransferase family.

It localises to the cytoplasm. The catalysed reaction is adenosine(37) in tRNA1(Val) + S-adenosyl-L-methionine = N(6)-methyladenosine(37) in tRNA1(Val) + S-adenosyl-L-homocysteine + H(+). Functionally, specifically methylates the adenine in position 37 of tRNA(1)(Val) (anticodon cmo5UAC). The polypeptide is tRNA1(Val) (adenine(37)-N6)-methyltransferase (Aliivibrio fischeri (strain MJ11) (Vibrio fischeri)).